Here is a 371-residue protein sequence, read N- to C-terminus: Neuropeptide Y receptor type 6 (371 aa).

Residues 1–31 (MEVSLNDPASNKTSAKSNSSAFFYFESCQSP) lie on the Extracellular side of the membrane. 2 N-linked (GlcNAc...) asparagine glycosylation sites follow: asparagine 11 and asparagine 18. Residues 32–52 (SLALLLLLIAYTVVLIMGICG) traverse the membrane as a helical segment. The Cytoplasmic segment spans residues 53–72 (NLSLITIIFKKQREAQNVTN). A helical membrane pass occupies residues 73–93 (ILIANLSLSDILVCVMCIPFT). Residues 94–111 (AIYTLMDRWIFGNTMCKL) are Extracellular-facing. The cysteines at positions 109 and 196 are disulfide-linked. Residues 112 to 132 (TSYVQSVSISVSIFSLVLIAI) form a helical membrane-spanning segment. The Cytoplasmic portion of the chain corresponds to 133–150 (ERYQLIVNPRGWKPSASH). A helical transmembrane segment spans residues 151-171 (AYWGIMLIWLFSLLLSIPLLL). At 172–213 (SYHLTDEPFRNLSLPTDLYSHHVVCVEHWPSKTNQLLYSTSL) the chain is on the extracellular side. The N-linked (GlcNAc...) asparagine glycan is linked to asparagine 182. Residues 214–234 (IMLQYFVPLGFMFICYLKIVI) form a helical membrane-spanning segment. Over 235–263 (CLHKRNSKIDRRRENESRLTENKRINTML) the chain is Cytoplasmic. Residues 264–284 (ISIVVTFAACWLPLNTFNVIF) form a helical membrane-spanning segment. Over 285–297 (DWYHEVLMSCHHD) the chain is Extracellular. A helical transmembrane segment spans residues 298–318 (LVFAICHLVAMVSTCINPLFY). At 319–371 (GFLNRNFQKDLVVLIHHCLCFALRERYENIAISTLHTDESKGSLRVAHIPAGI) the chain is on the cytoplasmic side. Residue cysteine 336 is the site of S-palmitoyl cysteine attachment.

It belongs to the G-protein coupled receptor 1 family. As to expression, expressed in hippocampus, striatum, hypothalamus, cerebellum, small intestine, colon and adrenal gland.

It is found in the cell membrane. Its function is as follows. Receptor for neuropeptide Y and peptide YY. The activity of this receptor is mediated by G proteins that inhibit adenylate cyclase activity. In Oryctolagus cuniculus (Rabbit), this protein is Neuropeptide Y receptor type 6 (NPY6R).